The sequence spans 208 residues: uncharacterized protein (208 aa).

This is an uncharacterized protein from Caenorhabditis elegans.